We begin with the raw amino-acid sequence, 257 residues long: Probable enoyl-CoA hydratase echA8 (257 aa).

This sequence belongs to the enoyl-CoA hydratase/isomerase family.

It carries out the reaction a (3S)-3-hydroxyacyl-CoA = a (2E)-enoyl-CoA + H2O. The enzyme catalyses a 4-saturated-(3S)-3-hydroxyacyl-CoA = a (3E)-enoyl-CoA + H2O. Could possibly oxidize fatty acids using specific components. The protein is Probable enoyl-CoA hydratase echA8 (echA8) of Mycobacterium leprae (strain TN).